Consider the following 220-residue polypeptide: Fructose-6-phosphate aldolase 1 (220 aa).

The active-site Schiff-base intermediate with substrate is lysine 85.

This sequence belongs to the transaldolase family. Type 3A subfamily. Homodecamer.

The protein resides in the cytoplasm. The catalysed reaction is beta-D-fructose 6-phosphate = dihydroxyacetone + D-glyceraldehyde 3-phosphate. Catalyzes the reversible formation of fructose 6-phosphate from dihydroxyacetone and D-glyceraldehyde 3-phosphate via an aldolization reaction. This chain is Fructose-6-phosphate aldolase 1 (fsaA), found in Escherichia coli O157:H7.